The primary structure comprises 203 residues: Thymidylate kinase (203 aa).

10 to 17 (GIDGAGKS) provides a ligand contact to ATP.

The protein belongs to the thymidylate kinase family.

It carries out the reaction dTMP + ATP = dTDP + ADP. Its function is as follows. Phosphorylation of dTMP to form dTDP in both de novo and salvage pathways of dTTP synthesis. The sequence is that of Thymidylate kinase from Cupriavidus taiwanensis (strain DSM 17343 / BCRC 17206 / CCUG 44338 / CIP 107171 / LMG 19424 / R1) (Ralstonia taiwanensis (strain LMG 19424)).